A 313-amino-acid chain; its full sequence is Ribosomal RNA small subunit methyltransferase H (313 aa).

Residues 35–37, aspartate 55, phenylalanine 80, aspartate 102, and glutamine 109 contribute to the S-adenosyl-L-methionine site; that span reads GGH.

This sequence belongs to the methyltransferase superfamily. RsmH family.

Its subcellular location is the cytoplasm. It catalyses the reaction cytidine(1402) in 16S rRNA + S-adenosyl-L-methionine = N(4)-methylcytidine(1402) in 16S rRNA + S-adenosyl-L-homocysteine + H(+). In terms of biological role, specifically methylates the N4 position of cytidine in position 1402 (C1402) of 16S rRNA. This Shewanella sp. (strain MR-4) protein is Ribosomal RNA small subunit methyltransferase H.